The sequence spans 117 residues: Immunoglobulin heavy variable 5-10-1 (117 aa).

A signal peptide spans M1–A19. The segment at E20–S44 is framework-1. Residues E20–R117 enclose the Ig-like domain. C41 and C115 are disulfide-bonded. The interval G45–W52 is complementarity-determining-1. The interval I53–R69 is framework-2. The complementarity-determining-2 stretch occupies residues I70 to T77. The tract at residues N78 to C115 is framework-3. Residues A116–R117 form a complementarity-determining-3 region.

In terms of assembly, immunoglobulins are composed of two identical heavy chains and two identical light chains; disulfide-linked.

It localises to the secreted. The protein resides in the cell membrane. V region of the variable domain of immunoglobulin heavy chains that participates in the antigen recognition. Immunoglobulins, also known as antibodies, are membrane-bound or secreted glycoproteins produced by B lymphocytes. In the recognition phase of humoral immunity, the membrane-bound immunoglobulins serve as receptors which, upon binding of a specific antigen, trigger the clonal expansion and differentiation of B lymphocytes into immunoglobulins-secreting plasma cells. Secreted immunoglobulins mediate the effector phase of humoral immunity, which results in the elimination of bound antigens. The antigen binding site is formed by the variable domain of one heavy chain, together with that of its associated light chain. Thus, each immunoglobulin has two antigen binding sites with remarkable affinity for a particular antigen. The variable domains are assembled by a process called V-(D)-J rearrangement and can then be subjected to somatic hypermutations which, after exposure to antigen and selection, allow affinity maturation for a particular antigen. In Homo sapiens (Human), this protein is Immunoglobulin heavy variable 5-10-1.